A 604-amino-acid polypeptide reads, in one-letter code: MAGDVEGFCSSIHDTSVSAGFRALYEEGLLLDVTLVIEDHQFQAHKALLATQSDYFRIMFTADMRERDQDKIHLKGLTATGFSHVLQFMYYGTIELSMNTVHEILQAAMYVQLIEVVKFCCSFLLAKICLENCAEIMRLLDDFGVNIEGVREKLDAFLLDNFVPLMSRPDFLSYLSFEKLMSYLDNDHLSRFPEIELYEAVQSWLRHDRRRWRHTDTIIQNIRFCLMTPSSVFEKVKTSEFYRYSRQLRYEVDQALNYFQNVHQQPLLDMKSSRIRSAKPQTTVFRGMIGHSMVNSKILLLKKPRVWWELEGPQVPLRPDCLAIVNNFVFLLGGEELGPDGEFHASSKVFRYDPRQNSWLRMADMSVPRSEFAVGVIGKFIYAVAGRTRDETFYSTERYDITNDKWEFVDPYPVNKYGHEGTVLNNKLFITGGITSSSTSKQVCVFDPSKEGTIEQRTRRTQVVTNCWENKSKMNYARCFHKMISYNGKLYVFGGVCVILRASFESQGCPSTEVYNPDTDQWTILASMPIGRSGHGVTVLDKQIMVLGGLCYNGHYSDSILTFDPDENKWKEDEYPRMPCKLDGLQVCNLHFPDYVLDEVRRCN.

The region spanning 31 to 98 (LDVTLVIEDH…MYYGTIELSM (68 aa)) is the BTB domain. The BACK domain maps to 133 to 237 (CAEIMRLLDD…TPSSVFEKVK (105 aa)). Kelch repeat units lie at residues 328 to 379 (FVFL…VIGK), 381 to 426 (IYAV…VLNN), 428 to 473 (LFIT…NKSK), 489 to 542 (KLYV…VLDK), and 544 to 590 (IMVL…VCNL).

Homodimer. Dimerization does not affect PPP2R5B-binding, but is required for its proteasomal degradation. Interacts with CUL3. Directly interacts with PPP2R5B; this interaction leads to PPP2R5B proteasomal degradation. Interacts with RBBP8/CtIP; this interaction leads to RBBP8 proteasomal degradation. Interacts with PACMP micropeptide; interaction prevents ubiquitination and degradation of RBBP8/CtIP.

Its subcellular location is the nucleus. It functions in the pathway protein modification; protein ubiquitination. Substrate-specific adapter for CUL3 E3 ubiquitin-protein ligase complex. Acts as an adapter for CUL3 to target the serine/threonine-protein phosphatase 2A (PP2A) subunit PPP2R5B for ubiquitination and subsequent proteasomal degradation, thus promoting exchange with other regulatory subunits and regulating PP2A holoenzyme composition. Acts as an adapter for CUL3 to target the DNA-end resection factor RBBP8/CtIP for ubiquitination and subsequent proteasomal degradation. Through the regulation of RBBP8/CtIP protein turnover, plays a key role in DNA damage response, favoring DNA double-strand repair through error-prone non-homologous end joining (NHEJ) over error-free, RBBP8-mediated homologous recombination (HR). This is Kelch-like protein 15 (Klhl15) from Mus musculus (Mouse).